Here is a 227-residue protein sequence, read N- to C-terminus: Probable methylthioribulose-1-phosphate dehydratase (227 aa).

Position 87 (Cys-87) interacts with substrate. Zn(2+) contacts are provided by His-105 and His-107. The active-site Proton donor/acceptor is Glu-129. His-185 contributes to the Zn(2+) binding site.

It belongs to the aldolase class II family. MtnB subfamily. Zn(2+) is required as a cofactor.

The protein localises to the cytoplasm. The catalysed reaction is 5-(methylsulfanyl)-D-ribulose 1-phosphate = 5-methylsulfanyl-2,3-dioxopentyl phosphate + H2O. Its pathway is amino-acid biosynthesis; L-methionine biosynthesis via salvage pathway; L-methionine from S-methyl-5-thio-alpha-D-ribose 1-phosphate: step 2/6. In terms of biological role, catalyzes the dehydration of methylthioribulose-1-phosphate (MTRu-1-P) into 2,3-diketo-5-methylthiopentyl-1-phosphate (DK-MTP-1-P). This is Probable methylthioribulose-1-phosphate dehydratase from Drosophila erecta (Fruit fly).